The following is a 417-amino-acid chain: RH-like protein (417 aa).

Transmembrane regions (helical) follow at residues 12 to 32 (CLPLWALTLEAALILLFFFFT), 44 to 64 (LVASYQVCQDLTVMAVLGLGF), 77 to 97 (VAFNLFLLALGVQWAILLDGF), 125 to 145 (ISMNAVLGKVNLAQLVVMELV), 172 to 192 (IHVFAAYFGLTVAWCLPKPLP), 203 to 223 (TSPSLFAMLGTLFLWMFWPTF), 238 to 258 (VFSTYYALAVSAVTAISVSSL), 265 to 285 (INMTYMPNAGLAGGVAVGASC), 287 to 307 (VIHSPWIAMVLGLVAGLISFG), 331 to 351 (TFGLPALLGEITYIVLMALRV), and 358 to 378 (MIGFQVLLSTGTLSLAMAMSI).

It belongs to the ammonium transporter (TC 2.A.49) family. Rh subfamily.

The protein localises to the membrane. Functionally, may be part of an oligomeric complex which is likely to have a transport or channel function in the erythrocyte membrane. The chain is RH-like protein from Macaca fascicularis (Crab-eating macaque).